The sequence spans 475 residues: Protein trichome birefringence-like 6 (475 aa).

A helical; Signal-anchor for type II membrane protein transmembrane segment spans residues 14 to 34 (VLAFIITIISSAIVFFTFFSS). A GDS motif motif is present at residues 211–213 (GDS). A DCXHWCLPGXXDXWN motif motif is present at residues 450–464 (DCSHWCLPGVPDTWN).

Belongs to the PC-esterase family. TBL subfamily.

It is found in the membrane. In terms of biological role, may act as a bridging protein that binds pectin and other cell wall polysaccharides. Probably involved in maintaining esterification of pectins. May be involved in the specific O-acetylation of cell wall polymers. The chain is Protein trichome birefringence-like 6 (TBL6) from Arabidopsis thaliana (Mouse-ear cress).